Consider the following 258-residue polypeptide: NAD(P)H-hydrate epimerase (258 aa).

One can recognise a YjeF N-terminal domain in the interval 15 to 244; sequence AFQLDQELMS…RIAKEYGIED (230 aa). 75–79 provides a ligand contact to (6S)-NADPHX; it reads NNGGD. Asn-76 and Asp-145 together coordinate K(+). (6S)-NADPHX contacts are provided by residues 149–155 and Asp-181; that span reads GFSFKPP. Ser-184 contacts K(+).

This sequence belongs to the NnrE/AIBP family. K(+) serves as cofactor.

It localises to the cytoplasm. The protein resides in the mitochondrion. It carries out the reaction (6R)-NADHX = (6S)-NADHX. The catalysed reaction is (6R)-NADPHX = (6S)-NADPHX. Its function is as follows. Catalyzes the epimerization of the S- and R-forms of NAD(P)HX, a damaged form of NAD(P)H that is a result of enzymatic or heat-dependent hydration. This is a prerequisite for the S-specific NAD(P)H-hydrate dehydratase to allow the repair of both epimers of NAD(P)HX. This Candida albicans (strain SC5314 / ATCC MYA-2876) (Yeast) protein is NAD(P)H-hydrate epimerase.